Consider the following 292-residue polypeptide: tRNA pseudouridine synthase B (292 aa).

D40 serves as the catalytic Nucleophile.

This sequence belongs to the pseudouridine synthase TruB family. Type 1 subfamily.

It catalyses the reaction uridine(55) in tRNA = pseudouridine(55) in tRNA. Its function is as follows. Responsible for synthesis of pseudouridine from uracil-55 in the psi GC loop of transfer RNAs. The chain is tRNA pseudouridine synthase B from Mycoplasma capricolum subsp. capricolum (strain California kid / ATCC 27343 / NCTC 10154).